A 328-amino-acid polypeptide reads, in one-letter code: GTP 3',8-cyclase (328 aa).

One can recognise a Radical SAM core domain in the interval 9–229 (GFGRDVRYLR…DNGLNTGGPA (221 aa)). GTP is bound at residue arginine 18. [4Fe-4S] cluster contacts are provided by cysteine 25 and cysteine 29. Position 31 (tyrosine 31) interacts with S-adenosyl-L-methionine. Cysteine 32 is a [4Fe-4S] cluster binding site. Arginine 60 contacts GTP. Residue glycine 64 participates in S-adenosyl-L-methionine binding. Threonine 94 is a binding site for GTP. Serine 118 serves as a coordination point for S-adenosyl-L-methionine. Lysine 154 serves as a coordination point for GTP. Residue methionine 188 participates in S-adenosyl-L-methionine binding. Positions 252 and 255 each coordinate [4Fe-4S] cluster. A GTP-binding site is contributed by 257 to 259 (RVR). Cysteine 269 contacts [4Fe-4S] cluster.

It belongs to the radical SAM superfamily. MoaA family. Monomer and homodimer. [4Fe-4S] cluster serves as cofactor.

It carries out the reaction GTP + AH2 + S-adenosyl-L-methionine = (8S)-3',8-cyclo-7,8-dihydroguanosine 5'-triphosphate + 5'-deoxyadenosine + L-methionine + A + H(+). Its pathway is cofactor biosynthesis; molybdopterin biosynthesis. Its function is as follows. Catalyzes the cyclization of GTP to (8S)-3',8-cyclo-7,8-dihydroguanosine 5'-triphosphate. The polypeptide is GTP 3',8-cyclase (Rhodobacter capsulatus (Rhodopseudomonas capsulata)).